Here is a 570-residue protein sequence, read N- to C-terminus: Interleukin-1 receptor accessory protein (570 aa).

The N-terminal stretch at 1–20 is a signal peptide; it reads MGLLWYLMSLSFYGILQSHA. Ig-like C2-type domains lie at 21 to 128, 139 to 230, and 243 to 348; these read SERC…VAFP, NSAM…RTVT, and PQIY…AKVK. Over 21–367 the chain is Extracellular; it reads SERCDDWGLD…VELACGFGAT (347 aa). Cystine bridges form between cysteine 24–cysteine 122, cysteine 47–cysteine 114, cysteine 137–cysteine 181, cysteine 160–cysteine 212, and cysteine 266–cysteine 332. N-linked (GlcNAc...) asparagine glycosylation occurs at asparagine 57. Positions 69 to 85 are essential for interaction with PTPRD; the sequence is IWYWTRQDRDLEEPINF. 3 N-linked (GlcNAc...) asparagine glycosylation sites follow: asparagine 107, asparagine 111, and asparagine 118. 3 N-linked (GlcNAc...) asparagine glycosylation sites follow: asparagine 196, asparagine 209, and asparagine 299. Residues 368–388 form a helical membrane-spanning segment; the sequence is VFLVVVLIVVYHVYWLEMVLF. At 389 to 570 the chain is on the cytoplasmic side; it reads YRAHFGTDET…GLSYSSLKNV (182 aa). One can recognise a TIR domain in the interval 403-546; that stretch reads KEYDIYVSYA…RFWKQLQVAM (144 aa). Glutamate 482 is a catalytic residue. Positions 550-570 are disordered; it reads KSPRWSSNDKQGLSYSSLKNV. Over residues 553–570 the composition is skewed to polar residues; that stretch reads RWSSNDKQGLSYSSLKNV.

The protein belongs to the interleukin-1 receptor family. The interleukin-36 receptor complex is a heterodimer of IL1RL2 and IL1RAP; the association is inhibited by IL36RN. The interleukin-1 receptor complex is a heterodimer of IL1R1 and IL1RAP. Associates with IL1R2 to form a non-signaling interleukin-1 receptor complex. Interacts with IL-33-bound IL1RL1 to form the minimal interleukin-33 signaling complex with a 1:1:1 stoichiometry. Interacts with KIT (independently of stimulation with KITLG/SCF). A mast cell-specific KITLG/SCF-induced interleukin-33 signaling complex contains IL1RL1, IL1RAP, KIT and MYD88. Interacts (via the first immunoglobilin domain) with PTPRD (via the third immunoglobilin domain); induces pre- and postsynaptic differentiation of neurons. As to expression, detected in lung, brain, spleen, thymus and liver. Expressed in brain endothelial cells, astrocytes, microglia and neurons. Isoform 3 is predominantly expressed in brain; expressed in hippocampal neurons.

It is found in the cell membrane. It localises to the secreted. The enzyme catalyses NAD(+) + H2O = ADP-D-ribose + nicotinamide + H(+). Functionally, coreceptor for IL1RL2 in the IL-36 signaling system. Coreceptor with IL1R1 in the IL-1 signaling system. Associates with IL1R1 bound to IL1B to form the high affinity interleukin-1 receptor complex which mediates interleukin-1-dependent activation of NF-kappa-B and other pathways. Signaling involves the recruitment of adapter molecules such as TOLLIP, MYD88, and IRAK1 or IRAK2 via the respective TIR domains of the receptor/coreceptor subunits. Recruits TOLLIP to the signaling complex. Does not bind to interleukin-1 alone; binding of IL1RN to IL1R1, prevents its association with IL1R1 to form a signaling complex. The cellular response is modulated through a non-signaling association with the membrane IL1R2 decoy receptor. Secreted forms (isoforms 2 and 3) associate with secreted ligand-bound IL1R2 and increase the affinity of secreted IL1R2 for IL1B; this complex formation may be the dominant mechanism for neutralization of IL1B by secreted/soluble receptors. Coreceptor for IL1RL1 in the IL-33 signaling system. Can bidirectionally induce pre- and postsynaptic differentiation of neurons by trans-synaptically binding to PTPRD. May play a role in IL1B-mediated costimulation of IFNG production from T-helper 1 (Th1) cells. Its function is as follows. Associates with secreted ligand-bound IL1R2 and increases the affinity of secreted IL1R2 for IL1B; this complex formation may be the dominant mechanism for neutralization of IL1B by secreted/soluble receptors. Enhances the ability of secreted IL1R1 to inhibit IL-33 signaling. In terms of biological role, required for Src phosphorylation by IL1B. Required for IL1B-potentiated NMDA-induced calcium influx in neurons acting in cooperation with IL1R1 isoform 2 to mediate Akt kinase activation. This is Interleukin-1 receptor accessory protein (Il1rap) from Mus musculus (Mouse).